We begin with the raw amino-acid sequence, 164 residues long: Endoribonuclease YbeY (164 aa).

The Zn(2+) site is built by His117, His121, and His127.

It belongs to the endoribonuclease YbeY family. The cofactor is Zn(2+).

It is found in the cytoplasm. In terms of biological role, single strand-specific metallo-endoribonuclease involved in late-stage 70S ribosome quality control and in maturation of the 3' terminus of the 16S rRNA. In Mycoplasma capricolum subsp. capricolum (strain California kid / ATCC 27343 / NCTC 10154), this protein is Endoribonuclease YbeY.